Reading from the N-terminus, the 41-residue chain is Large ribosomal subunit protein bL36 (41 aa).

This sequence belongs to the bacterial ribosomal protein bL36 family.

The protein is Large ribosomal subunit protein bL36 of Bartonella henselae (strain ATCC 49882 / DSM 28221 / CCUG 30454 / Houston 1) (Rochalimaea henselae).